A 347-amino-acid polypeptide reads, in one-letter code: Galactoside alpha-(1,2)-fucosyltransferase 2 (347 aa).

Residues 1-5 (MASAQ) are Cytoplasmic-facing. A helical; Signal-anchor for type II membrane protein membrane pass occupies residues 6–26 (VPFSFPLAHFLIFVFVTSTII). Topologically, residues 27–347 (HLQQRIVKLQ…PADLSPLLKH (321 aa)) are lumenal. 4 N-linked (GlcNAc...) asparagine glycosylation sites follow: N192, N258, N286, and N312.

It belongs to the glycosyltransferase 11 family. Expressed in stomach, colon, ovary and uterus, specifically in luminal uterine epithelium. Expressed in various tissues including heart, liver, kidney, testis, epididymis, small intestine,and cecum. Expressed in duodenum, jejunum and ileum.

The protein localises to the golgi apparatus. It is found in the golgi stack membrane. The enzyme catalyses a beta-D-galactosyl-(1-&gt;3)-N-acetyl-beta-D-glucosaminyl derivative + GDP-beta-L-fucose = an alpha-L-Fuc-(1-&gt;2)-beta-D-Gal-(1-&gt;3)-beta-D-GlcNAc derivative + GDP + H(+). It carries out the reaction a beta-D-galactosyl-(1-&gt;4)-N-acetyl-beta-D-glucosaminyl derivative + GDP-beta-L-fucose = an alpha-L-Fuc-(1-&gt;2)-beta-D-Gal-(1-&gt;4)-beta-D-GlcNAc derivative + GDP + H(+). The catalysed reaction is a neolactoside nLc4Cer + GDP-beta-L-fucose = a neolactoside IV(2)-alpha-Fuc-nLc4Cer + GDP + H(+). It catalyses the reaction a neolactoside nLc4Cer(d18:1(4E)) + GDP-beta-L-fucose = a neolactoside IV(2)-alpha-Fuc-nLc4Cer(d18:1(4E)) + GDP + H(+). The enzyme catalyses a ganglioside GM1 + GDP-beta-L-fucose = a ganglioside Fuc-GM1 + GDP + H(+). It carries out the reaction a ganglioside GA1 + GDP-beta-L-fucose = a ganglioside Fuc-GA1 + GDP + H(+). The catalysed reaction is Lc4Cer + GDP-beta-L-fucose = alpha-L-fucosyl-(1-&gt;2)-beta-D-galactosyl-(1-&gt;3)-N-acetyl-beta-D-glucosaminyl-(1-&gt;3)-beta-D-galactosyl-(1-&gt;4)-beta-D-glucosyl-(1&lt;-&gt;1')-ceramide + GDP + H(+). It catalyses the reaction a beta-D-Gal-(1-&gt;3)-beta-D-GlcNAc-(1-&gt;3)-beta-D-Gal-(1-&gt;4)-beta-D-Glc-(1&lt;-&gt;1')-Cer(d18:1(4E)) + GDP-beta-L-fucose = alpha-L-fucosyl-(1-&gt;2)- beta-D-galactosyl-(1-&gt;3)-N-acetyl-beta-D-glucosaminyl-(1-&gt;3)-beta-D-galactosyl-(1-&gt;4)-beta-D-glucosyl-(1&lt;-&gt;1')-N-acylsphing-4-enine + GDP + H(+). The enzyme catalyses a ganglioside GD1b + GDP-beta-L-fucose = a ganglioside Fuc-GD1b + GDP + H(+). It carries out the reaction a ganglioside GM1 (d18:1(4E)) + GDP-beta-L-fucose = a ganglioside Fuc-GM1 (d18:1(4E)) + GDP + H(+). The catalysed reaction is a globoside GalGb4Cer (d18:1(4E)) + GDP-beta-L-fucose = a globoside Globo-H (d18:1(4E)) + GDP + H(+). It catalyses the reaction a lactoside III(4)-a-Fuc-Lc4Cer + GDP-beta-L-fucose = a lactoside IV(2),III(4)-a-[Fuc]2-Lc4Cer + GDP + H(+). The enzyme catalyses beta-D-galactosyl-(1-&gt;3)-N-acetyl-D-galactosamine + GDP-beta-L-fucose = alpha-L-fucosyl-(1-&gt;2)-beta-D-galactosyl-(1-&gt;3)-N-acetyl-D-galactosamine + GDP + H(+). It participates in protein modification; protein glycosylation. Its function is as follows. Catalyzes the transfer of L-fucose, from a guanosine diphosphate-beta-L-fucose, to the terminal galactose on both O- and N-linked glycans chains of cell surface glycoproteins and glycolipids and the resulting epitope regulates several processes such as cell-cell interaction including host-microbe interaction, cell surface expression and cell proliferation. Preferentially fucosylates gangliosides GA1 and GM1 in the antrum, cecum and colon and in the female reproductive organs. Fucosylated host glycoproteins or glycolipids mediate interaction with intestinal microbiota influencing its composition. Creates a soluble precursor oligosaccharide FuC-alpha ((1,2)Galbeta-) called the H antigen which is an essential substrate for the final step in the soluble ABO blood group antigen synthesis pathway. This chain is Galactoside alpha-(1,2)-fucosyltransferase 2, found in Mus musculus (Mouse).